Here is a 219-residue protein sequence, read N- to C-terminus: Interleukin-12 subunit alpha (219 aa).

Residues Met-1 to Ala-22 form the signal peptide. N-linked (GlcNAc...) asparagine glycans are attached at residues Asn-24 and Asn-93. 3 disulfides stabilise this stretch: Cys-37/Cys-110, Cys-64/Cys-196, and Cys-85/Cys-123.

This sequence belongs to the IL-6 superfamily. Heterodimer with IL12B; disulfide-linked. This heterodimer is known as interleukin IL-12. Heterodimer with EBI3/IL27B; not disulfide-linked. This heterodimer is known as interleukin IL-35. Interacts with NBR1; this interaction promotes IL-12 secretion.

It localises to the secreted. In terms of biological role, heterodimerizes with IL12B to form the IL-12 cytokine or with EBI3/IL27B to form the IL-35 cytokine. IL-12 is primarily produced by professional antigen-presenting cells (APCs) such as B-cells and dendritic cells (DCs) as well as macrophages and granulocytes and regulates T-cell and natural killer-cell responses, induces the production of interferon-gamma (IFN-gamma), favors the differentiation of T-helper 1 (Th1) cells and is an important link between innate resistance and adaptive immunity. Mechanistically, exerts its biological effects through a receptor composed of IL12R1 and IL12R2 subunits. Binding to the receptor results in the rapid tyrosine phosphorylation of a number of cellular substrates including the JAK family kinases TYK2 and JAK2. In turn, recruited STAT4 gets phosphorylated and translocates to the nucleus where it regulates cytokine/growth factor responsive genes. As part of IL-35, plays essential roles in maintaining the immune homeostasis of the liver microenvironment and also functions as an immune-suppressive cytokine. Mediates biological events through unconventional receptors composed of IL12RB2 and gp130/IL6ST heterodimers or homodimers. Signaling requires the transcription factors STAT1 and STAT4, which form a unique heterodimer that binds to distinct DNA sites. In Papio anubis (Olive baboon), this protein is Interleukin-12 subunit alpha (IL12A).